The chain runs to 348 residues: MSDRLTLLRPDDWHIHLRDGAVLPNTVADVARTFGRAIIMPNLVPPVRNAAEADAYRQRILAARPAGSRFEPLMVLYLTDRTQPEEIRAAKACGFVHAAKLYPAGATTNSDSGVTSIDKIFPVLEAMAEVGLPLLIHGEVTRGDVDVFDREKIFIDEHMRRVVERFPSLKVVFEHITTAEAVQFVKEASANVGATITAHHLLYNRNHMLVGGIRPHFYCLPILKRNTHQEALLDAATSGNAKFFLGTDSAPHAQHAKEAACGCAGCYSAYAAIELYAEAFEQRNALDQLEAFASLNGPRFYGLPANTDSITLVREEWTAPASLPFGELTVIPLRAGEKLRWRLLEDHS.

Residues His-14 and His-16 each contribute to the Zn(2+) site. Substrate contacts are provided by residues 16-18 (HLR) and Asn-42. Zn(2+)-binding residues include Lys-100, His-137, and His-175. Lys-100 carries the post-translational modification N6-carboxylysine. Position 137 (His-137) interacts with substrate. Leu-220 contributes to the substrate binding site. Asp-248 serves as a coordination point for Zn(2+). The active site involves Asp-248. Residues His-252 and Ala-264 each contribute to the substrate site.

Belongs to the metallo-dependent hydrolases superfamily. DHOase family. Class II DHOase subfamily. In terms of assembly, homodimer. The cofactor is Zn(2+).

The catalysed reaction is (S)-dihydroorotate + H2O = N-carbamoyl-L-aspartate + H(+). It participates in pyrimidine metabolism; UMP biosynthesis via de novo pathway; (S)-dihydroorotate from bicarbonate: step 3/3. Functionally, catalyzes the reversible cyclization of carbamoyl aspartate to dihydroorotate. The protein is Dihydroorotase of Pseudomonas fluorescens (strain ATCC BAA-477 / NRRL B-23932 / Pf-5).